Here is a 430-residue protein sequence, read N- to C-terminus: Serine--tRNA ligase (430 aa).

231–233 (TSE) contacts L-serine. ATP is bound at residue 262-264 (RSE). Glu-285 provides a ligand contact to L-serine. Residue 349 to 352 (EISS) participates in ATP binding. Position 385 (Ser-385) interacts with L-serine.

This sequence belongs to the class-II aminoacyl-tRNA synthetase family. Type-1 seryl-tRNA synthetase subfamily. Homodimer. The tRNA molecule binds across the dimer.

Its subcellular location is the cytoplasm. It carries out the reaction tRNA(Ser) + L-serine + ATP = L-seryl-tRNA(Ser) + AMP + diphosphate + H(+). It catalyses the reaction tRNA(Sec) + L-serine + ATP = L-seryl-tRNA(Sec) + AMP + diphosphate + H(+). It participates in aminoacyl-tRNA biosynthesis; selenocysteinyl-tRNA(Sec) biosynthesis; L-seryl-tRNA(Sec) from L-serine and tRNA(Sec): step 1/1. In terms of biological role, catalyzes the attachment of serine to tRNA(Ser). Is also able to aminoacylate tRNA(Sec) with serine, to form the misacylated tRNA L-seryl-tRNA(Sec), which will be further converted into selenocysteinyl-tRNA(Sec). The polypeptide is Serine--tRNA ligase (Jannaschia sp. (strain CCS1)).